The chain runs to 1262 residues: Isoleucine--tRNA ligase, cytoplasmic (1262 aa).

At methionine 1 the chain carries N-acetylmethionine. Positions 48–58 (PFATGLPHYGH) match the 'HIGH' region motif. Residues 600 to 604 (KMSKR) carry the 'KMSKS' region motif. Lysine 603 lines the ATP pocket. Phosphoserine occurs at positions 1047 and 1049. Phosphothreonine is present on threonine 1058.

The protein belongs to the class-I aminoacyl-tRNA synthetase family. Part of a multisubunit complex that groups tRNA ligases for Arg (RARS1), Asp (DARS1), Gln (QARS1), Ile (IARS1), Leu (LARS1), Lys (KARS1), Met (MARS1) the bifunctional ligase for Glu and Pro (EPRS1) and the auxiliary subunits AIMP1/p43, AIMP2/p38 and EEF1E1/p18. In terms of tissue distribution, expressed in liver and muscle (at protein level).

The protein resides in the cytoplasm. Its subcellular location is the cytosol. It catalyses the reaction tRNA(Ile) + L-isoleucine + ATP = L-isoleucyl-tRNA(Ile) + AMP + diphosphate. Catalyzes the specific attachment of an amino acid to its cognate tRNA in a 2 step reaction: the amino acid (AA) is first activated by ATP to form AA-AMP and then transferred to the acceptor end of the tRNA. The chain is Isoleucine--tRNA ligase, cytoplasmic from Homo sapiens (Human).